Reading from the N-terminus, the 602-residue chain is Threonine--tRNA ligase (602 aa).

Positions 208 to 499 (DHRKLGTELK…LTEHCAGEFP (292 aa)) are catalytic. Residues cysteine 300, histidine 351, and histidine 476 each contribute to the Zn(2+) site.

The protein belongs to the class-II aminoacyl-tRNA synthetase family. As to quaternary structure, homodimer. Zn(2+) serves as cofactor.

It localises to the cytoplasm. It carries out the reaction tRNA(Thr) + L-threonine + ATP = L-threonyl-tRNA(Thr) + AMP + diphosphate + H(+). Functionally, catalyzes the attachment of threonine to tRNA(Thr) in a two-step reaction: L-threonine is first activated by ATP to form Thr-AMP and then transferred to the acceptor end of tRNA(Thr). Also edits incorrectly charged L-seryl-tRNA(Thr). This chain is Threonine--tRNA ligase, found in Campylobacter jejuni subsp. jejuni serotype O:6 (strain 81116 / NCTC 11828).